Here is a 142-residue protein sequence, read N- to C-terminus: Type II secretion system core protein G (142 aa).

Residues 1 to 8 (MRRQSQRG) constitute a propeptide, leader sequence. Phe-9 carries the N-methylphenylalanine modification. Residues 9-29 (FTLLEIMVVIVIMGILASLVV) traverse the membrane as a helical segment. The disordered stretch occupies residues 122 to 142 (SGQDGVPGTDDDIGNWTLSKK).

This sequence belongs to the GSP G family. In terms of assembly, type II secretion system is composed of four main components: the outer membrane complex, the inner membrane complex, the cytoplasmic secretion ATPase and the periplasm-spanning pseudopilus. Forms homomultimers. Post-translationally, cleaved by the prepilin peptidase. Methylated by prepilin peptidase at the amino group of the N-terminal phenylalanine once the leader sequence is cleaved.

The protein resides in the cell inner membrane. Core component of the type II secretion system required for the energy-dependent secretion of extracellular factors such as proteases and toxins from the periplasm. Pseudopilin (pilin-like) protein that polymerizes to form the pseudopilus. Further polymerization triggers pseudopilus growth. This chain is Type II secretion system core protein G, found in Klebsiella michiganensis (strain ATCC 8724 / DSM 4798 / JCM 20051 / NBRC 3318 / NRRL B-199 / KCTC 1686 / BUCSAV 143 / CCM 1901).